Here is a 133-residue protein sequence, read N- to C-terminus: Putative nickel-responsive regulator (133 aa).

The Ni(2+) site is built by histidine 74, histidine 85, histidine 87, and cysteine 93.

Belongs to the transcriptional regulatory CopG/NikR family. It depends on Ni(2+) as a cofactor.

Functionally, transcriptional regulator. The polypeptide is Putative nickel-responsive regulator (Saccharolobus islandicus (strain Y.N.15.51 / Yellowstone #2) (Sulfolobus islandicus)).